The following is a 695-amino-acid chain: Polyribonucleotide nucleotidyltransferase (695 aa).

Mg(2+) contacts are provided by D486 and D492. The 60-residue stretch at 553 to 612 folds into the KH domain; it reads PRIETMQINTSKIATVIGPGGKQIRQIIERSGAQVDINDDGVINIAASTQESINKAKELI. The S1 motif domain occupies 622–690; that stretch reads GKVYNGRVTS…EKGQLKLSHK (69 aa).

The protein belongs to the polyribonucleotide nucleotidyltransferase family. It depends on Mg(2+) as a cofactor.

It is found in the cytoplasm. The enzyme catalyses RNA(n+1) + phosphate = RNA(n) + a ribonucleoside 5'-diphosphate. Functionally, involved in mRNA degradation. Catalyzes the phosphorolysis of single-stranded polyribonucleotides processively in the 3'- to 5'-direction. This chain is Polyribonucleotide nucleotidyltransferase, found in Chlamydia trachomatis serovar D (strain ATCC VR-885 / DSM 19411 / UW-3/Cx).